The chain runs to 257 residues: Imidazole glycerol phosphate synthase subunit HisF (257 aa).

Residues Asp-12 and Asp-131 contribute to the active site.

Belongs to the HisA/HisF family. In terms of assembly, heterodimer of HisH and HisF.

It is found in the cytoplasm. It catalyses the reaction 5-[(5-phospho-1-deoxy-D-ribulos-1-ylimino)methylamino]-1-(5-phospho-beta-D-ribosyl)imidazole-4-carboxamide + L-glutamine = D-erythro-1-(imidazol-4-yl)glycerol 3-phosphate + 5-amino-1-(5-phospho-beta-D-ribosyl)imidazole-4-carboxamide + L-glutamate + H(+). It functions in the pathway amino-acid biosynthesis; L-histidine biosynthesis; L-histidine from 5-phospho-alpha-D-ribose 1-diphosphate: step 5/9. IGPS catalyzes the conversion of PRFAR and glutamine to IGP, AICAR and glutamate. The HisF subunit catalyzes the cyclization activity that produces IGP and AICAR from PRFAR using the ammonia provided by the HisH subunit. The chain is Imidazole glycerol phosphate synthase subunit HisF from Marinobacter nauticus (strain ATCC 700491 / DSM 11845 / VT8) (Marinobacter aquaeolei).